The primary structure comprises 750 residues: 5-methyltetrahydropteroyltriglutamate--homocysteine methyltransferase (750 aa).

Residues Arg15 to Lys18 and Lys114 contribute to the 5-methyltetrahydropteroyltri-L-glutamate site. Residues Ile425–Ser427 and Glu478 contribute to the L-homocysteine site. L-methionine is bound by residues Ile425–Ser427 and Glu478. Trp555 is a 5-methyltetrahydropteroyltri-L-glutamate binding site. Asp593 lines the L-homocysteine pocket. Asp593 is a binding site for L-methionine. 5-methyltetrahydropteroyltri-L-glutamate is bound at residue Glu599. Residues His636, Cys638, and Glu660 each contribute to the Zn(2+) site. His689 functions as the Proton donor in the catalytic mechanism. Cys721 lines the Zn(2+) pocket.

It belongs to the vitamin-B12 independent methionine synthase family. It depends on Zn(2+) as a cofactor.

It carries out the reaction 5-methyltetrahydropteroyltri-L-glutamate + L-homocysteine = tetrahydropteroyltri-L-glutamate + L-methionine. The protein operates within amino-acid biosynthesis; L-methionine biosynthesis via de novo pathway; L-methionine from L-homocysteine (MetE route): step 1/1. Catalyzes the transfer of a methyl group from 5-methyltetrahydrofolate to homocysteine resulting in methionine formation. The polypeptide is 5-methyltetrahydropteroyltriglutamate--homocysteine methyltransferase (Streptococcus gordonii (strain Challis / ATCC 35105 / BCRC 15272 / CH1 / DL1 / V288)).